A 228-amino-acid chain; its full sequence is Cytidylate kinase (228 aa).

12–20 lines the ATP pocket; that stretch reads GPSGAGKGT.

The protein belongs to the cytidylate kinase family. Type 1 subfamily.

Its subcellular location is the cytoplasm. It carries out the reaction CMP + ATP = CDP + ADP. It catalyses the reaction dCMP + ATP = dCDP + ADP. This is Cytidylate kinase from Photobacterium profundum (strain SS9).